Consider the following 496-residue polypeptide: Gamma-aminobutyric acid receptor subunit beta-like (496 aa).

Residues 1–20 (MTCFTRVGVSCGLFFFLLGA) constitute a signal peptide (or 27). At 21-258 (QLQLIRCIRK…SFKLQRNIGY (238 aa)) the chain is on the extracellular side. Asparagine 39 and asparagine 189 each carry an N-linked (GlcNAc...) asparagine glycan. A disulfide bridge connects residues cysteine 176 and cysteine 190. 3 helical membrane-spanning segments follow: residues 259 to 280 (FVFQ…SFWI), 285 to 306 (TSAR…STGV), and 318 to 342 (AIDI…AVNY). The Cytoplasmic segment spans residues 343–472 (TYWGKRAKKK…KIKDVNIIDK (130 aa)). A helical transmembrane segment spans residues 473 to 494 (YSRMIFPISFLAFNLGYWLFYI).

The protein belongs to the ligand-gated ion channel (TC 1.A.9) family. Gamma-aminobutyric acid receptor (TC 1.A.9.5) subfamily. As to quaternary structure, generally pentameric. There are five types of GABA(A) receptor chains: alpha, beta, gamma, delta, and rho. Interacts with Grd (alpha chain).

The protein localises to the postsynaptic cell membrane. It is found in the cell membrane. GABA, an inhibitory neurotransmitter, mediates neuronal inhibition by binding to the GABA receptor and opening an integral chloride channel. Combines with the ligand-gated ion channel subunit GRD to form cation-selective GABA-gated ion channels when coexpressed in Xenopus laevis oocytes. The protein is Gamma-aminobutyric acid receptor subunit beta-like (Lcch3) of Drosophila melanogaster (Fruit fly).